We begin with the raw amino-acid sequence, 422 residues long: Dihydrolipoyllysine-residue succinyltransferase component of 2-oxoglutarate dehydrogenase complex (422 aa).

One can recognise a Lipoyl-binding domain in the interval 1–76; sequence MPEVKVPELA…EVGQAIAIIG (76 aa). N6-lipoyllysine is present on Lys42. The interval 77–184 is disordered; that stretch reads EGSGNASKEN…APAKEEKKYN (108 aa). Composition is skewed to polar residues over residues 80–94 and 116–130; these read GNAS…TPQQ and NQAN…NATP. Residues 127-163 form the Peripheral subunit-binding (PSBD) domain; that stretch reads NATPSARRYARENGVNLAEVSPKTNDVVRKEDIDKKQ. The span at 152 to 163 shows a compositional bias: basic and acidic residues; it reads DVVRKEDIDKKQ. Low complexity predominate over residues 164–176; sequence QAPASTQTTQQAP. Residues His393 and Asp397 contribute to the active site.

The protein belongs to the 2-oxoacid dehydrogenase family. In terms of assembly, forms a 24-polypeptide structural core with octahedral symmetry. Part of the 2-oxoglutarate dehydrogenase (OGDH) complex composed of E1 (2-oxoglutarate dehydrogenase), E2 (dihydrolipoamide succinyltransferase) and E3 (dihydrolipoamide dehydrogenase); the complex contains multiple copies of the three enzymatic components (E1, E2 and E3). (R)-lipoate serves as cofactor.

It catalyses the reaction N(6)-[(R)-dihydrolipoyl]-L-lysyl-[protein] + succinyl-CoA = N(6)-[(R)-S(8)-succinyldihydrolipoyl]-L-lysyl-[protein] + CoA. It participates in amino-acid degradation; L-lysine degradation via saccharopine pathway; glutaryl-CoA from L-lysine: step 6/6. Functionally, E2 component of the 2-oxoglutarate dehydrogenase (OGDH) complex which catalyzes the second step in the conversion of 2-oxoglutarate to succinyl-CoA and CO(2). The chain is Dihydrolipoyllysine-residue succinyltransferase component of 2-oxoglutarate dehydrogenase complex (odhB) from Staphylococcus aureus (strain Mu50 / ATCC 700699).